The primary structure comprises 501 residues: Head-tail preconnector protein GP5 (501 aa).

Ser-162 functions as the Nucleophile in the catalytic mechanism. The active-site Proton donor/acceptor is Lys-214. TRI repeat units lie at residues 321–358 (ILTCQEAKGREQLATMLAGQQGMSVEQARAILAAAAPQ), 371–417 (IMVC…LRDQ), and 418–455 (IMALDEAKGAEAQAEQLAACPGMTVESARAVLAAGSGK). The segment at 321–455 (ILTCQEAKGR…RAVLAAGSGK (135 aa)) is 3 X 38 AA repeats.

The protein belongs to the peptidase S49 family.

Its function is as follows. Scaffold protein GP6 forms the scaffold for capsid assembly and is required for binding of the 5 and 4 protein products. It is subsequently lost from the head during maturation. The chain is Head-tail preconnector protein GP5 (5) from Escherichia coli (Bacteriophage 21).